The following is a 457-amino-acid chain: Siroheme synthase (457 aa).

Positions 1–204 are precorrin-2 dehydrogenase /sirohydrochlorin ferrochelatase; sequence MDHLPIFCQL…NDQKAITETT (204 aa). NAD(+)-binding positions include 22–23 and 43–44; these read DV and LA. Ser-128 is subject to Phosphoserine. A uroporphyrinogen-III C-methyltransferase region spans residues 216-457; it reads GEVVLVGAGP…RDKLNWFSNH (242 aa). An S-adenosyl-L-methionine-binding site is contributed by Pro-225. The active-site Proton acceptor is the Asp-248. The Proton donor role is filled by Lys-270. S-adenosyl-L-methionine is bound by residues 301 to 303, Ile-306, 331 to 332, Met-382, and Gly-411; these read GGD and TA.

The protein in the N-terminal section; belongs to the precorrin-2 dehydrogenase / sirohydrochlorin ferrochelatase family. This sequence in the C-terminal section; belongs to the precorrin methyltransferase family.

It catalyses the reaction uroporphyrinogen III + 2 S-adenosyl-L-methionine = precorrin-2 + 2 S-adenosyl-L-homocysteine + H(+). The catalysed reaction is precorrin-2 + NAD(+) = sirohydrochlorin + NADH + 2 H(+). The enzyme catalyses siroheme + 2 H(+) = sirohydrochlorin + Fe(2+). It participates in cofactor biosynthesis; adenosylcobalamin biosynthesis; precorrin-2 from uroporphyrinogen III: step 1/1. Its pathway is cofactor biosynthesis; adenosylcobalamin biosynthesis; sirohydrochlorin from precorrin-2: step 1/1. It functions in the pathway porphyrin-containing compound metabolism; siroheme biosynthesis; precorrin-2 from uroporphyrinogen III: step 1/1. The protein operates within porphyrin-containing compound metabolism; siroheme biosynthesis; siroheme from sirohydrochlorin: step 1/1. It participates in porphyrin-containing compound metabolism; siroheme biosynthesis; sirohydrochlorin from precorrin-2: step 1/1. Multifunctional enzyme that catalyzes the SAM-dependent methylations of uroporphyrinogen III at position C-2 and C-7 to form precorrin-2 via precorrin-1. Then it catalyzes the NAD-dependent ring dehydrogenation of precorrin-2 to yield sirohydrochlorin. Finally, it catalyzes the ferrochelation of sirohydrochlorin to yield siroheme. The chain is Siroheme synthase from Escherichia coli O157:H7 (strain EC4115 / EHEC).